The following is a 574-amino-acid chain: Transmembrane protein 108 (574 aa).

The helical transmembrane segment at 9-29 (YCQLLSFLLTLALTKALVLAV) threads the bilayer. Residues 31–169 (EPSPRESLQT…ATTRRPPRPP (139 aa)) form an interaction with SH3GL2 region. Disordered regions lie at residues 32-352 (PSPR…SGVF) and 364-417 (DATV…PRPL). Polar residues predominate over residues 58–86 (TRLSSVLTLNPTPDGPSSQAAATLETTVS). Residues 132-160 (LPPGDATPTTTLPTKPAGTTSRPTVAPRA) are compositionally biased toward low complexity. Residues 173-406 (RKGAGGSTRT…SPAEEEAEAS (234 aa)) form an interaction with DST (isoform 1) region. A compositionally biased stretch (polar residues) spans 245 to 271 (FSSTQPQTVSPATAPRSTSRVPPTTSL). Over residues 292–312 (TSPGGEPAATAATGAPASTQP) the composition is skewed to low complexity. Positions 316–332 (PSQSPHGDVQDSASHSD) are enriched in polar residues. The helical transmembrane segment at 468–488 (IAWVIVAISVPISSCSVLLTV) threads the bilayer. The interval 489–574 (CCMRRKKKTA…FVGNDQVSEI (86 aa)) is interaction with CYFIP2.

In terms of assembly, interacts with DST (isoform 1). Interacts with SH3GL2. Interacts (via N-terminus) with CYFIP1 and CYFIP2; the interactions associate TMEM108 with the WAVE1 complex. Glycosylated. As to expression, expressed in the nervous system tissues, such as hippocampus and spinal cord, is barely detectable in peripheral tissues such as heart, lung, liver, kidney and muscle. In brain, highly expressed in dentate gyrus neurons and expressed in cortex, olfactory bulb, ammon's horn, cerebellum, hypothalamus and striatum.

The protein resides in the membrane. The protein localises to the postsynaptic density. Its subcellular location is the endosome membrane. It localises to the cell projection. It is found in the axon. The protein resides in the dendrite. The protein localises to the early endosome. In terms of biological role, transmembrane protein required for proper cognitive functions. Involved in the development of dentate gyrus (DG) neuron circuitry, is necessary for AMPA receptors surface expression and proper excitatory postsynaptic currents of DG granule neurons. Regulates the organization and stability of the microtubule network of sensory neurons to allow axonal transport. Through the interaction with DST, mediates the docking of the dynein/dynactin motor complex to vesicle cargos for retrograde axonal transport. In hippocampal neurons, required for BDNF-dependent dendrite outgrowth. Cooperates with SH3GL2 and recruits the WAVE1 complex to facilitate actin-dependent BDNF:NTRK2 early endocytic trafficking and mediate signaling from early endosomes. This is Transmembrane protein 108 from Mus musculus (Mouse).